Here is a 2269-residue protein sequence, read N- to C-terminus: Neuron navigator 3 (2269 aa).

Residues 55-162 (SKICKIYTDW…LFFILSRYKQ (108 aa)) enclose the Calponin-homology (CH) domain. Residues 186-207 (TGAAQLSQHKTQDMQSSLTARY) show a composition bias toward polar residues. 2 disordered regions span residues 186–358 (TGAA…RSML) and 388–532 (SEFG…NKGS). Low complexity predominate over residues 236–252 (GSGSNSSKGSSNLNRRS). 2 stretches are compositionally biased toward polar residues: residues 267–291 (ASGN…QQLA) and 305–319 (SKSM…SSML). Residues 323–333 (PPSPTSSPTPP) show a composition bias toward pro residues. Residues 346-356 (ASKSAPGNQRS) are compositionally biased toward polar residues. The segment covering 411–432 (PSASAFAPPSKSNNCKNHNNKS) has biased composition (low complexity). Over residues 505–518 (TATSKPAGTQSCVP) the composition is skewed to polar residues. Residues 644–672 (ETRRMRTVKNIADLRQNLEETMSSLRGTQ) are a coiled coil. 6 disordered regions span residues 692–737 (GRGL…STTV), 756–776 (ASGA…VGPE), 836–1036 (VKEM…IPGP), 1050–1079 (SGSA…TSLD), 1097–1412 (VPLQ…GTTC), and 1461–1487 (GGSA…TDEV). Polar residues-rich tracts occupy residues 699-716 (SSRS…SSPR) and 727-737 (PPRSSAGSTTV). The segment covering 847-860 (DSSSVSSGLSDTLD) has biased composition (low complexity). Over residues 874–886 (GISSRKSKAAQSN) the composition is skewed to polar residues. Over residues 919–932 (PSCKWKTSSPSSSC) the composition is skewed to low complexity. The span at 939–950 (QKTGLPMSQTGS) shows a compositional bias: polar residues. Positions 977 to 989 (GKTDDAKASEKGK) are enriched in basic and acidic residues. Residues 1110-1137 (SSSGGSSVVSRSGHRSSSSSIDSNVSGK) show a composition bias toward low complexity. The segment covering 1163–1172 (GRSSPVTINQ) has biased composition (polar residues). 2 stretches are compositionally biased toward low complexity: residues 1185 to 1202 (GTGL…TQSG) and 1223 to 1234 (GSKASSKPSSPG). Residues 1266-1276 (GSLGSMGGQSG) show a composition bias toward gly residues. Residues 1292–1305 (SPASSPASGLSLPS) show a composition bias toward low complexity. Composition is skewed to polar residues over residues 1313–1339 (NLSS…SSES) and 1354–1363 (RTGSVKSTLS). Residues 1381–1391 (TSHEEGKEWLR) are compositionally biased toward basic and acidic residues. Residues 1392-1412 (SHSTGGLQDTGSPLSPPGTTC) show a composition bias toward polar residues. Positions 1499–1586 (SSLYSAQIRK…TDAQTAIQVA (88 aa)) form a coiled coil. Disordered stretches follow at residues 1602–1672 (QHSS…PSSP), 1756–1792 (NDRL…SRQS), and 2207–2269 (GYSS…ESAL). Low complexity-rich tracts occupy residues 1605 to 1623 (SESM…LGSA) and 1765 to 1792 (TTPA…SRQS). A coiled-coil region spans residues 1697-1765 (CECTEAEAEI…NDRLKSSGNT (69 aa)). The span at 2208–2224 (YSSSKDGAASKQVSQSD) shows a compositional bias: polar residues.

It belongs to the Nav/unc-53 family. As to quaternary structure, interacts with F-actin.

The protein resides in the nucleus outer membrane. Its subcellular location is the golgi apparatus. It localises to the cell projection. It is found in the lamellipodium. The protein localises to the filopodium. In terms of biological role, involved in liver and heart organogenesis during embryo development. Plays a role in the migration of hepatoblasts from the intestinal endoderm during liver organogenesis; possibly by modulating actin polymerization during hepatoblast outgrowth. May be involved in neuron regeneration. This is Neuron navigator 3 (nav3) from Danio rerio (Zebrafish).